The following is a 708-amino-acid chain: Tryptophan synthase (708 aa).

Residues 1–305 (MEGIKQTFQR…EADIDAQLAA (305 aa)) form a tryptophan synthase alpha chain region. Active-site proton acceptor residues include glutamate 49 and aspartate 60. Residues 306–708 (LHGTIPKRFG…GPKIGWDLRF (403 aa)) are tryptophan synthase beta chain. Residue lysine 392 is modified to N6-(pyridoxal phosphate)lysine.

In the N-terminal section; belongs to the TrpA family. It in the C-terminal section; belongs to the TrpB family. Pyridoxal 5'-phosphate is required as a cofactor.

The enzyme catalyses (1S,2R)-1-C-(indol-3-yl)glycerol 3-phosphate + L-serine = D-glyceraldehyde 3-phosphate + L-tryptophan + H2O. Its pathway is amino-acid biosynthesis; L-tryptophan biosynthesis; L-tryptophan from chorismate: step 5/5. In Neurospora crassa (strain ATCC 24698 / 74-OR23-1A / CBS 708.71 / DSM 1257 / FGSC 987), this protein is Tryptophan synthase (trp-3).